The chain runs to 609 residues: Grainyhead-like protein 1 homolog (609 aa).

The tract at residues 1–91 (MTQDYDNKRP…EHDHADHEHS (91 aa)) is transcription activation. The segment at 183–207 (SDHFTSNNQPPNSQRRTPDSTFSET) is disordered. Over residues 185–206 (HFTSNNQPPNSQRRTPDSTFSE) the composition is skewed to polar residues. A Grh/CP2 DB domain is found at 239–465 (AGNNFEYTLE…DLDTQPVLFI (227 aa)). Interaction with DNA stretches follow at residues 371-380 (TDFSSQKGVK) and 418-421 (RKIR).

This sequence belongs to the grh/CP2 family. Grainyhead subfamily. In terms of assembly, binds DNA as homodimer.

The protein resides in the nucleus. Transcription factor involved in epithelial development. Binds directly to the consensus DNA sequence 5'-AACCGGTT-3' and modulates expression of epidermal-specific genes, including XK81A1. Important regulator of DSG1 in the context of epidermal differentiation. Regulates the maintenance of skin barrier. No genetic interaction with GRHL3, nor functional cooperativity due to diverse target gene selectivity during epithelia development. Functions downstream of BMP-signaling cascade modulating endogenous bmp4-responsive targets. This Xenopus laevis (African clawed frog) protein is Grainyhead-like protein 1 homolog.